Here is a 97-residue protein sequence, read N- to C-terminus: Large ribosomal subunit protein eL21 (97 aa).

Belongs to the eukaryotic ribosomal protein eL21 family.

The polypeptide is Large ribosomal subunit protein eL21 (Methanococcus vannielii (strain ATCC 35089 / DSM 1224 / JCM 13029 / OCM 148 / SB)).